The sequence spans 121 residues: Large ribosomal subunit protein uL18 (121 aa).

Residues 63-88 (AAIRPDPSPKKSQKQPPKTHKRYNLK) form a disordered region. The segment covering 73–87 (KSQKQPPKTHKRYNL) has biased composition (basic residues).

It belongs to the universal ribosomal protein uL18 family. In terms of assembly, component of the large ribosomal subunit (LSU).

It localises to the cytoplasm. It is found in the nucleus. Its function is as follows. Component of the ribosome, a large ribonucleoprotein complex responsible for the synthesis of proteins in the cell. The small ribosomal subunit (SSU) binds messenger RNAs (mRNAs) and translates the encoded message by selecting cognate aminoacyl-transfer RNA (tRNA) molecules. The large subunit (LSU) contains the ribosomal catalytic site termed the peptidyl transferase center (PTC), which catalyzes the formation of peptide bonds, thereby polymerizing the amino acids delivered by tRNAs into a polypeptide chain. The nascent polypeptides leave the ribosome through a tunnel in the LSU and interact with protein factors that function in enzymatic processing, targeting, and the membrane insertion of nascent chains at the exit of the ribosomal tunnel. In Solanum melongena (Eggplant), this protein is Large ribosomal subunit protein uL18 (RPL5).